The chain runs to 375 residues: Decapping and exoribonuclease protein Rai1 (375 aa).

Residues R43 and 120–122 (LRG) each bind substrate. Mg(2+)-binding residues include E180, E222, D224, E247, and L248. Substrate is bound at residue E222. Substrate-binding residues include K249 and Q274.

Belongs to the DXO/Dom3Z family. Interacts with Rat1. The cofactor is Mg(2+).

It catalyses the reaction a 5'-end triphospho-ribonucleoside in mRNA + H2O = a 5'-end phospho-ribonucleoside in mRNA + diphosphate + H(+). It carries out the reaction a 5'-end NAD(+)-phospho-ribonucleoside in mRNA + H2O = a 5'-end phospho-ribonucleoside in mRNA + NAD(+) + H(+). The enzyme catalyses a 5'-end (N(7)-methyl 5'-triphosphoguanosine)-ribonucleoside-ribonucleotide in mRNA + H2O = a (N(7)-methyl 5'-triphosphoguanosine)-nucleoside + a 5'-end phospho-ribonucleoside in mRNA + H(+). In terms of biological role, decapping enzyme for NAD-capped RNAs: specifically hydrolyzes the nicotinamide adenine dinucleotide (NAD) cap from a subset of RNAs by removing the entire NAD moiety from the 5'-end of an NAD-capped RNA. The NAD-cap is present at the 5'-end of some RNAs and snoRNAs. In contrast to the canonical 5'-end N7 methylguanosine (m7G) cap, the NAD cap promotes mRNA decay. Also acts as a non-canonical decapping enzyme that removes the entire cap structure of m7G capped or incompletely capped RNAs and mediates their subsequent degradation. Specifically degrades pre-mRNAs with a defective 5'-end m7G cap and is part of a pre-mRNA capping quality control. Possesses 5'-pyrophosphohydrolase activity, hydrolyzing the 5'-end triphosphate to release pyrophosphates, and 5'-3' exonuclease activity. May be involved in RNA degradation in the nucleus. This Drosophila melanogaster (Fruit fly) protein is Decapping and exoribonuclease protein Rai1.